A 324-amino-acid polypeptide reads, in one-letter code: Heat-inducible transcription repressor HrcA (324 aa).

The protein belongs to the HrcA family.

Its function is as follows. Negative regulator of class I heat shock genes (grpE-dnaK-dnaJ and groELS operons). Prevents heat-shock induction of these operons. The protein is Heat-inducible transcription repressor HrcA of Parasynechococcus marenigrum (strain WH8102).